Here is a 106-residue protein sequence, read N- to C-terminus: Terpredoxin (106 aa).

Positions Pro-2 to Ala-106 constitute a 2Fe-2S ferredoxin-type domain. [2Fe-2S] cluster is bound by residues Cys-40, Cys-46, Cys-49, and Cys-87.

Belongs to the adrenodoxin/putidaredoxin family. [2Fe-2S] cluster is required as a cofactor.

The oxidation of alpha-terpineol by cytochrome p450-TERP requires the participation of a flavoprotein, terpredoxin reductase, and an iron-sulfur protein, terpredoxin, to mediate the transfer of electrons from NADH to P450 for oxygen activation. The protein is Terpredoxin (terPB) of Pseudomonas sp.